The chain runs to 84 residues: Delta-stichotoxin-Shd3a (84 aa).

The first 19 residues, 1 to 19 (MAYLKIVLVALMLVLGVSA), serve as a signal peptide directing secretion. A propeptide spanning residues 20–33 (MRLSDQEDQDVSVV) is cleaved from the precursor. 3 disulfide bridges follow: C38-C78, C40-C68, and C61-C79. K83 carries the post-translational modification Lysine amide.

The protein belongs to the sea anemone sodium channel inhibitory toxin family. Type II subfamily.

The protein resides in the secreted. The protein localises to the nematocyst. Binds specifically to voltage-gated sodium channels (Nav), thereby delaying their inactivation during signal transduction. The protein is Delta-stichotoxin-Shd3a of Stichodactyla haddoni (Saddle carpet anemone).